Consider the following 601-residue polypeptide: Trehalose synthase/amylase TreS (601 aa).

The tract at residues 1–21 is disordered; that stretch reads MNEAEHSVEHPPVQGSHVEGG. D98 is a substrate binding site. N140 contributes to the Ca(2+) binding site. 2 residues coordinate substrate: H141 and Q206. Position 208 (D208) interacts with Ca(2+). R236 is a substrate binding site. The Nucleophile role is filled by D238. 3 residues coordinate Ca(2+): Y242, L243, and E245. E280 serves as the catalytic Proton donor. Residues H349 and D350 each contribute to the substrate site.

It belongs to the glycosyl hydrolase 13 family. TreS subfamily. In terms of assembly, homohexamer.

It catalyses the reaction D-maltose = alpha,alpha-trehalose. The enzyme catalyses Endohydrolysis of (1-&gt;4)-alpha-D-glucosidic linkages in polysaccharides containing three or more (1-&gt;4)-alpha-linked D-glucose units.. Its pathway is glycan biosynthesis; glycogen biosynthesis. It participates in capsule biogenesis; capsule polysaccharide biosynthesis. Its function is as follows. Catalyzes the reversible interconversion of maltose and trehalose by transglucosylation. Also displays amylase activity, catalyzing the endohydrolysis of (1-&gt;4)-alpha-D-glucosidic linkages in glycogen and maltooligosaccharides such as maltoheptaose, to produce maltose which then can be converted to trehalose. TreS plays a key role in the utilization of trehalose for the production of glycogen and alpha-glucan via the TreS-Pep2 branch involved in the biosynthesis of maltose-1-phosphate (M1P). Might also function as a sensor and/or regulator of trehalose levels within the cell. Thus, when trehalose levels in the cell become dangerously low, TreS could expedite the conversion of glycogen to maltose via its amylase activity and then convert the maltose to trehalose; but this enzyme also could expedite or promote the conversion of trehalose to glycogen when cytoplasmic trehalose levels become too high. The sequence is that of Trehalose synthase/amylase TreS from Mycobacterium tuberculosis (strain CDC 1551 / Oshkosh).